A 139-amino-acid chain; its full sequence is Putative lipoprotein LpqV (139 aa).

The signal sequence occupies residues 1 to 25 (MRPSRYAPLLCAMVLALAWLSAVAG). The N-palmitoyl cysteine moiety is linked to residue Cys-26. Residue Cys-26 is the site of S-diacylglycerol cysteine attachment.

The protein localises to the cell membrane. The protein is Putative lipoprotein LpqV (lpqV) of Mycobacterium bovis (strain ATCC BAA-935 / AF2122/97).